A 428-amino-acid chain; its full sequence is Dual-specificity RNA methyltransferase RlmN (428 aa).

A compositionally biased stretch (basic and acidic residues) spans 1–17 (MPLHRVEALGEPQDRTG). The interval 1–44 (MPLHRVEALGEPQDRTGKTFSGRTNGPISSPLTDTERRMSIPQN) is disordered. Residues 18–33 (KTFSGRTNGPISSPLT) are compositionally biased toward polar residues. The active-site Proton acceptor is the Glu136. The Radical SAM core domain maps to 142 to 381 (EDDRGALCVS…APIRMPRGRD (240 aa)). Cys149 and Cys386 form a disulfide bridge. Cys156, Cys160, and Cys163 together coordinate [4Fe-4S] cluster. Residues 212–213 (GE), Ser244, 266–268 (SLH), and Asn343 contribute to the S-adenosyl-L-methionine site. Cys386 functions as the S-methylcysteine intermediate in the catalytic mechanism.

It belongs to the radical SAM superfamily. RlmN family. [4Fe-4S] cluster is required as a cofactor.

It localises to the cytoplasm. It carries out the reaction adenosine(2503) in 23S rRNA + 2 reduced [2Fe-2S]-[ferredoxin] + 2 S-adenosyl-L-methionine = 2-methyladenosine(2503) in 23S rRNA + 5'-deoxyadenosine + L-methionine + 2 oxidized [2Fe-2S]-[ferredoxin] + S-adenosyl-L-homocysteine. It catalyses the reaction adenosine(37) in tRNA + 2 reduced [2Fe-2S]-[ferredoxin] + 2 S-adenosyl-L-methionine = 2-methyladenosine(37) in tRNA + 5'-deoxyadenosine + L-methionine + 2 oxidized [2Fe-2S]-[ferredoxin] + S-adenosyl-L-homocysteine. In terms of biological role, specifically methylates position 2 of adenine 2503 in 23S rRNA and position 2 of adenine 37 in tRNAs. m2A2503 modification seems to play a crucial role in the proofreading step occurring at the peptidyl transferase center and thus would serve to optimize ribosomal fidelity. The sequence is that of Dual-specificity RNA methyltransferase RlmN from Rhodospirillum rubrum (strain ATCC 11170 / ATH 1.1.1 / DSM 467 / LMG 4362 / NCIMB 8255 / S1).